The chain runs to 268 residues: Putative F-box protein At3g23420 (268 aa).

One can recognise an F-box domain in the interval 5-51 (PRDLSDLPRNMAEEVLSRVPMTSLRRLRFTCKKWNTLSRCRSFAKKH).

The polypeptide is Putative F-box protein At3g23420 (Arabidopsis thaliana (Mouse-ear cress)).